We begin with the raw amino-acid sequence, 921 residues long: Retinoblastoma-associated protein (921 aa).

2 disordered regions span residues 1 to 31 (MPPK…PPGG) and 603 to 634 (RSPK…QKPQ). Positions 612–634 (HPQSGTSNPDAQPSATSQTQKPQ) are enriched in polar residues. Residues 853–869 (KRSAEPSDAPKPLKRLR) carry the Bipartite nuclear localization signal motif. Positions 873-921 (EGQDEADGGKHLPQESKFQQKLAEMTSTRTRMQKQKLNDGNDTSANEEK) are disordered. Over residues 910 to 921 (NDGNDTSANEEK) the composition is skewed to polar residues.

Belongs to the retinoblastoma protein (RB) family. Interacts with and sequesters the E2F1 transcription factor, thereby inhibiting E2F1 transcription. Interacts with SUV39H1, KMT5B and KMT5C. As to quaternary structure, (Microbial infection) Interacts with, and is inhibited by fowl adenovirus 1 protein GAM-1. In terms of processing, phosphorylated in G1, thereby releasing E2F1 which is then able to activate cell growth. Dephosphorylated at the late M phase. Phosphorylation of domain C promotes interaction between the C-terminal domain C and the Pocket domain, and thereby inhibits interactions with heterodimeric E2F/DP transcription factor complexes.

Its subcellular location is the nucleus. It is found in the cytoplasm. In terms of biological role, tumor suppressor that is a key regulator of the G1/S transition of the cell cycle. The hypophosphorylated form binds transcription regulators of the E2F family, preventing transcription of E2F-responsive genes. Both physically blocks E2Fs transactivating domain and recruits chromatin-modifying enzymes that actively repress transcription. Cyclin and CDK-dependent phosphorylation of RB1 induces its dissociation from E2Fs, thereby activating transcription of E2F responsive genes and triggering entry into S phase. RB1 also promotes the G0-G1 transition upon phosphorylation and activation by CDK3/cyclin-C. This Gallus gallus (Chicken) protein is Retinoblastoma-associated protein (RB1).